Reading from the N-terminus, the 641-residue chain is MKTPTSTIQTNAATATHGNLVSTSNANFSEHMDERSSVLTQDTQEFLTDLLNRQKTRLNELSSHLSSMAHSETFLSSLKSSMHWPVEELTCDKVVTLLTKLKDTDVAANSVETLIEKLKDSSRGILRADNVSSLDAIDISKQNDLLWKELETFRHIRGILESFLQTHYSKSSRLINQESVEVLMGQLLEHEKDNLRLREQVVEKETKVEDLLHLIQQEKDTAVKSNQVSRSTEATHIRLQNLVKRKETENQQIVTQIQSLAAVISGRKLEIEDLRREITHLKEKQTFEKEGLKKAFRVQKQKVDNFQDVMENLNTQIKKKETELSEVHSSCSIWKDHHDSAVETKTRLEVQHESLTKQISDHLKLIKTMDEEREQSKEENAEKISAIILENAHFSEENVKLKASIAALESETVLVNSELLEVREKASQQKHFAEQYENQVQKLQEELNKLKEKFKDVLTKKKEILENKASENKKVDTNDYFLGNESFKLENNRIERKCEEIRIKLEKMIMHNEQLESKLKGQERDLQRSEVELEGKAKECSTLMRLLENAVEAGNKQISEENNKVLSKELALQRKLQSLESELKRKRAEHKQLGCTLNAFEKTHNLRLEEIRHSLEMTESRNKSIQSYVQFLKTSYAAMFE.

Coiled-coil stretches lie at residues 83–144, 191–270, 299–375, and 487–599; these read HWPV…KQND, EKDN…RKLE, QKQK…EREQ, and FKLE…TLNA.

Belongs to the ODF2 family.

It is found in the cytoplasm. The protein resides in the cytoskeleton. Its subcellular location is the microtubule organizing center. It localises to the centrosome. The protein localises to the centriole. It is found in the centriolar satellite. The protein resides in the cilium basal body. Functionally, acts as a suppressor of ciliogenesis, specifically, the initiation of ciliogenesis. The chain is Protein BCAP (odf2l) from Xenopus laevis (African clawed frog).